We begin with the raw amino-acid sequence, 352 residues long: 4-hydroxy-3-methylbut-2-en-1-yl diphosphate synthase (flavodoxin) (352 aa).

[4Fe-4S] cluster-binding residues include Cys262, Cys265, Cys297, and Glu304.

The protein belongs to the IspG family. Requires [4Fe-4S] cluster as cofactor.

It catalyses the reaction (2E)-4-hydroxy-3-methylbut-2-enyl diphosphate + oxidized [flavodoxin] + H2O + 2 H(+) = 2-C-methyl-D-erythritol 2,4-cyclic diphosphate + reduced [flavodoxin]. The protein operates within isoprenoid biosynthesis; isopentenyl diphosphate biosynthesis via DXP pathway; isopentenyl diphosphate from 1-deoxy-D-xylulose 5-phosphate: step 5/6. In terms of biological role, converts 2C-methyl-D-erythritol 2,4-cyclodiphosphate (ME-2,4cPP) into 1-hydroxy-2-methyl-2-(E)-butenyl 4-diphosphate. This Campylobacter curvus (strain 525.92) protein is 4-hydroxy-3-methylbut-2-en-1-yl diphosphate synthase (flavodoxin).